Consider the following 994-residue polypeptide: Protein translocase subunit SecA (994 aa).

Residues Gln-85, 103–107 (GEGKT), and Asp-492 each bind ATP. Residues 868-888 (IPDGAGPVADAQPVRPAAARQ) show a composition bias toward low complexity. The disordered stretch occupies residues 868–994 (IPDGAGPVAD…HGDPARRNTE (127 aa)). The segment covering 889-900 (TPPPPSPVPSAP) has biased composition (pro residues). Zn(2+)-binding residues include Cys-973, Cys-975, Cys-984, and His-985. Basic and acidic residues predominate over residues 984–994 (CHGDPARRNTE).

The protein belongs to the SecA family. As to quaternary structure, monomer and homodimer. Part of the essential Sec protein translocation apparatus which comprises SecA, SecYEG and auxiliary proteins SecDF. Other proteins may also be involved. Zn(2+) is required as a cofactor.

It localises to the cell membrane. The protein localises to the cytoplasm. The catalysed reaction is ATP + H2O + cellular proteinSide 1 = ADP + phosphate + cellular proteinSide 2.. In terms of biological role, part of the Sec protein translocase complex. Interacts with the SecYEG preprotein conducting channel. Has a central role in coupling the hydrolysis of ATP to the transfer of proteins into and across the cell membrane, serving as an ATP-driven molecular motor driving the stepwise translocation of polypeptide chains across the membrane. The sequence is that of Protein translocase subunit SecA from Frankia casuarinae (strain DSM 45818 / CECT 9043 / HFP020203 / CcI3).